The chain runs to 301 residues: MAQSLKDLAGRLPAGPRGVGTALKLLLGAGALAYGVRESVFIVEGGQRAIFFNRIGGVQQDTILAEGLHFRIPWFQYPIIYDIRARPRKISSPTGSKDLQMVNISLRVLTRPNAAELPSMYQRLGLDYEERVLPSIVNEVLKSVVAKFNASQLITQRAQVSLLIRRELTERAKDFSLILDDVAITELSFSREYTAAVEAKQVAQQEAQRAQFLVEKAKQEQKQKIVQAEGEATAAKMLGEALSRNPGYIKLRKIRAAQNISKTIAGSQNRVYLTADNLVLNLQDEGFTRGSDSLLLKQGKK.

Necessary for transcriptional repression stretches follow at residues 19-49 (VGTA…GQRA) and 150-174 (ASQL…RAKD). Residues 190 to 237 (SREYTAAVEAKQVAQQEAQRAQFLVEKAKQEQKQKIVQAEGEATAAKM) are a coiled coil.

The protein belongs to the prohibitin family. In terms of assembly, the mitochondrial prohibitin complex consists of two subunits (PHB1 and PHB2), assembled into a membrane-associated ring-shaped supercomplex of approximately 1 mDa.

The protein localises to the mitochondrion inner membrane. The protein resides in the cytoplasm. Its subcellular location is the nucleus. It is found in the cell membrane. Protein with pleiotropic attributes mediated in a cell-compartment- and tissue-specific manner, which include the plasma membrane-associated cell signaling functions, mitochondrial chaperone, and transcriptional co-regulator of transcription factors and sex steroid hormones in the nucleus. In terms of biological role, in the mitochondria, together with PHB, forms large ring complexes (prohibitin complexes) in the inner mitochondrial membrane (IMM) and functions as a chaperone protein that stabilizes mitochondrial respiratory enzymes and maintains mitochondrial integrity in the IMM, which is required for mitochondrial morphogenesis, neuronal survival, and normal lifespan. Functionally, in the nucleus, serves as transcriptional co-regulator. The chain is Prohibitin-2 (PHB2) from Gallus gallus (Chicken).